We begin with the raw amino-acid sequence, 112 residues long: Putative pterin-4-alpha-carbinolamine dehydratase (112 aa).

Belongs to the pterin-4-alpha-carbinolamine dehydratase family.

It carries out the reaction (4aS,6R)-4a-hydroxy-L-erythro-5,6,7,8-tetrahydrobiopterin = (6R)-L-erythro-6,7-dihydrobiopterin + H2O. The sequence is that of Putative pterin-4-alpha-carbinolamine dehydratase from Shewanella putrefaciens (strain CN-32 / ATCC BAA-453).